Reading from the N-terminus, the 200-residue chain is QPSISDQQVSALPYSDQIQQPLTNQVMPDIVMLQRRWMDRYEIDSLIGKVEQEWVAIKAFLNQAQIEVRHDTEMKYYIVHLKIVDFGSSCQLGQRIVEVLGIPPAHILDQAPKFFEKLPDGTWSLKKLHNILGVETGGPGGRFKDLILRMLDYDPKIQPYYALQHSFFKQETGIAGHPTYQFSANTGPAHYMTEGHLAMR.

A Phosphotyrosine; by autocatalysis modification is found at Tyr-41. Lys-58 lines the ATP pocket. At Tyr-76 the chain carries Phosphotyrosine; by autocatalysis. Phosphoserine; by autocatalysis is present on Ser-88. Residue Thr-122 is modified to Phosphothreonine; by autocatalysis.

The protein belongs to the protein kinase superfamily. CMGC Ser/Thr protein kinase family. MNB/DYRK subfamily. In terms of assembly, interacts with RAD54L2/ARIP4. Interacts with CRY2. Interacts with RANBP9. Interacts with WDR68. Interacts with SIRT1. Can also autophosphorylate on serine and threonine residues (in vitro). Autophosphorylated on numerous tyrosine residues.

It localises to the nucleus. The enzyme catalyses L-tyrosyl-[protein] + ATP = O-phospho-L-tyrosyl-[protein] + ADP + H(+). The catalysed reaction is L-seryl-[protein] + ATP = O-phospho-L-seryl-[protein] + ADP + H(+). It catalyses the reaction L-threonyl-[protein] + ATP = O-phospho-L-threonyl-[protein] + ADP + H(+). It carries out the reaction [DNA-directed RNA polymerase] + ATP = phospho-[DNA-directed RNA polymerase] + ADP + H(+). With respect to regulation, inhibited by RANBP9. In terms of biological role, dual-specificity kinase which possesses both serine/threonine and tyrosine kinase activities. Exhibits a substrate preference for proline at position P+1 and arginine at position P-3. Plays an important role in double-strand breaks (DSBs) repair following DNA damage. Mechanistically, phosphorylates RNF169 and increases its ability to block accumulation of TP53BP1 at the DSB sites thereby promoting homologous recombination repair (HRR). Also acts as a positive regulator of transcription by acting as a CTD kinase that mediates phosphorylation of the CTD (C-terminal domain) of the large subunit of RNA polymerase II (RNAP II) POLR2A. May play a role in a signaling pathway regulating nuclear functions of cell proliferation. Modulates alternative splicing by phosphorylating the splice factor SRSF6. Has pro-survival function and negatively regulates the apoptotic process. Promotes cell survival upon genotoxic stress through phosphorylation of SIRT1. This in turn inhibits p53/TP53 activity and apoptosis. Phosphorylates SEPTIN4, SEPTIN5 and SF3B1 at 'Thr-434'. The protein is Dual specificity tyrosine-phosphorylation-regulated kinase 1A of Oryctolagus cuniculus (Rabbit).